Consider the following 115-residue polypeptide: NADH-ubiquinone oxidoreductase chain 3 (115 aa).

A run of 3 helical transmembrane segments spans residues 3–23 (IMIT…IAFW), 55–75 (FFLV…LLPL), and 87–107 (MLTT…YEWL).

Belongs to the complex I subunit 3 family. In terms of assembly, core subunit of respiratory chain NADH dehydrogenase (Complex I) which is composed of 45 different subunits. Interacts with TMEM186. Interacts with TMEM242.

It is found in the mitochondrion inner membrane. The catalysed reaction is a ubiquinone + NADH + 5 H(+)(in) = a ubiquinol + NAD(+) + 4 H(+)(out). Its function is as follows. Core subunit of the mitochondrial membrane respiratory chain NADH dehydrogenase (Complex I) which catalyzes electron transfer from NADH through the respiratory chain, using ubiquinone as an electron acceptor. Essential for the catalytic activity of complex I. In Dasypus novemcinctus (Nine-banded armadillo), this protein is NADH-ubiquinone oxidoreductase chain 3.